The sequence spans 369 residues: Prenyltransferase malB (369 aa).

Position 87 (glutamate 87) interacts with substrate. Arginine 100 and tyrosine 189 together coordinate dimethylallyl diphosphate. A substrate-binding site is contributed by tyrosine 191.

Belongs to the tryptophan dimethylallyltransferase family.

Its function is as follows. Prenyltransferase; part of the gene cluster that mediates the biosynthesis of malbrancheamide, a dichlorinated fungal indole alkaloid that belongs to a family of natural products containing a characteristic bicyclo[2.2.2]diazaoctane core. The first step of malbrancheamide biosynthesis involves coupling of L-proline and L-tryptophan by malG, a bimodular NRPS, to produce L-Pro-L-Trp aldehyde through reductive offloading. This compound undergoes spontaneous cyclization and dehydration to give a dienamine which is reverse prenylated at C-2 by malE. The other prenyltransferase present in the cluster, malB, displays modest activity, suggesting that may be a redundant gene in the pathway. Subsequently, a [4+2] Diels-Alder cyclo-addition catalyzed by the bifunctional enzyme malC forms the characteristic bicyclo[2.2.2]diazaoctane ring of premalbrancheamid. Finally, the flavin-dependent halogenase malA catalyzes the iterative dichlorination of the indole ring of premalbrancheamide to yield C-9 monochlorinated malbrancheamide B, C-8 monochlorinated isomalbrancheamide B, and dichlorinated malbrancheamide. MalA is also able to brominate premalbrancheamide at C-9 to yield malbrancheamide C, and, to a lesser extend, at C-8 to yield isomalbrancheamide C. Finally, malA can brominate C-9 monochlorinated malbrancheamide B at C-8 to yield malbrancheamide D, or C-8 monochlorinated isomalbrancheamide B at C-9 to produce isomalbrancheamide D. This Malbranchea aurantiaca protein is Prenyltransferase malB.